The sequence spans 130 residues: MRHRKSGRQLNRNSSHRQAMFRNMAGSLVRHEIIKTTLPKAKELRRVVEPLITLAKIDSVANRRLAFARTRDNEIVAKLFNELGPRFASRAGGYTRILKCGFRAGDNAPMAYIELVDRATEPQTEVATAE.

It belongs to the bacterial ribosomal protein bL17 family. In terms of assembly, part of the 50S ribosomal subunit. Contacts protein L32.

In Photorhabdus laumondii subsp. laumondii (strain DSM 15139 / CIP 105565 / TT01) (Photorhabdus luminescens subsp. laumondii), this protein is Large ribosomal subunit protein bL17.